The sequence spans 335 residues: MSKRVTSSKKSKIMREDSENDSAKNLSKTSKSVSKSKEAGSKRTKQNSSKSSKDLKTTKNIGGSKSSRTYNSEGSKNIKKTSSSKDSKVIKKNKQKVESSDSEKHSENKSHKKSSKSSSISRKKPIKKDTRKINIELVSDSDNNSDSELNGVDTTGDDIIYLKGEDNNDEKQNKKSPKKLLNEKKISSESFDDKLNELREELRENYIRQKKIMNDIKDLANLHKKDLRLAVKSGNRLNSGKHSGFNKPQTVPQSLKDLLKINDDVLSRSKVTELMYKYFTDNKMYNSKTKREIIPNSKIKKLFGMKEGDIITFYNMQTWLKKVYNENQNNEKLEE.

A compositionally biased stretch (basic residues) spans 1–12; it reads MSKRVTSSKKSK. Residues 1–182 are disordered; sequence MSKRVTSSKK…NKKSPKKLLN (182 aa). The segment covering 24–33 has biased composition (low complexity); that stretch reads KNLSKTSKSV. Residues 60–75 show a composition bias toward polar residues; it reads NIGGSKSSRTYNSEGS. Over residues 83-109 the composition is skewed to basic and acidic residues; that stretch reads SSKDSKVIKKNKQKVESSDSEKHSENK. The segment covering 110–126 has biased composition (basic residues); that stretch reads SHKKSSKSSSISRKKPI. The span at 163-173 shows a compositional bias: basic and acidic residues; the sequence is KGEDNNDEKQN. Residues 181–217 adopt a coiled-coil conformation; that stretch reads LNEKKISSESFDDKLNELREELRENYIRQKKIMNDIK. One can recognise an SWIB/MDM2 domain in the interval 244 to 326; the sequence is GFNKPQTVPQ…QTWLKKVYNE (83 aa).

The polypeptide is Putative SWIB domain-containing protein R508 (Acanthamoeba polyphaga mimivirus (APMV)).